A 462-amino-acid chain; its full sequence is tRNA(Ile)-lysidine synthase (462 aa).

Residue 31–36 (SGGRDS) participates in ATP binding.

Belongs to the tRNA(Ile)-lysidine synthase family.

It is found in the cytoplasm. The catalysed reaction is cytidine(34) in tRNA(Ile2) + L-lysine + ATP = lysidine(34) in tRNA(Ile2) + AMP + diphosphate + H(+). Ligates lysine onto the cytidine present at position 34 of the AUA codon-specific tRNA(Ile) that contains the anticodon CAU, in an ATP-dependent manner. Cytidine is converted to lysidine, thus changing the amino acid specificity of the tRNA from methionine to isoleucine. This Ralstonia nicotianae (strain ATCC BAA-1114 / GMI1000) (Ralstonia solanacearum) protein is tRNA(Ile)-lysidine synthase.